We begin with the raw amino-acid sequence, 121 residues long: UPF0344 protein BT9727_1053 (121 aa).

The next 4 helical transmembrane spans lie at 6 to 26, 38 to 58, 65 to 85, and 92 to 112; these read ITAWALGLILFFVAYSLYSAG, LMYIIIIVTGFMLYMGIMKTA, WYGLKMIAGILVIGGMEMVLV, and ATGAVWGLFIVALVAVFYLGL.

Belongs to the UPF0344 family.

It is found in the cell membrane. The chain is UPF0344 protein BT9727_1053 from Bacillus thuringiensis subsp. konkukian (strain 97-27).